Here is a 1153-residue protein sequence, read N- to C-terminus: Tyrosine-protein kinase JAK1 (1153 aa).

An FERM domain is found at 32-416 (KGLEIHFYLA…GYFRLTVDAH (385 aa)). The 106-residue stretch at 435–540 (GCHGPICTEY…NLRFQLRRCC (106 aa)) folds into the SH2; atypical domain. Protein kinase domains lie at 580 to 846 (IVQG…DIVM) and 872 to 1150 (LKKI…QQML). Residues 878 to 886 (LGEGHFGKV) and Lys-905 each bind ATP. Asp-1000 acts as the Proton acceptor in catalysis. A phosphotyrosine; by autocatalysis mark is found at Tyr-1031 and Tyr-1032.

This sequence belongs to the protein kinase superfamily. Tyr protein kinase family. JAK subfamily. Requires Mg(2+) as cofactor.

It localises to the endomembrane system. It catalyses the reaction L-tyrosyl-[protein] + ATP = O-phospho-L-tyrosyl-[protein] + ADP + H(+). Its function is as follows. Tyrosine kinase of the non-receptor type, involved in the IFN-alpha/beta/gamma signal pathway. Appears to be required in early development for specific cell migrations (epiboly), expression of homeobox protein goosecoid and formation of anterior structures. The sequence is that of Tyrosine-protein kinase JAK1 (jak1) from Danio rerio (Zebrafish).